Consider the following 156-residue polypeptide: Ribosome-binding factor A (156 aa).

The interval 124–156 is disordered; it reads TRAEYAGEAQPYRLEEEPEGSGDEVPPPGGDQR.

The protein belongs to the RbfA family. Monomer. Binds 30S ribosomal subunits, but not 50S ribosomal subunits or 70S ribosomes.

It is found in the cytoplasm. Its function is as follows. One of several proteins that assist in the late maturation steps of the functional core of the 30S ribosomal subunit. Associates with free 30S ribosomal subunits (but not with 30S subunits that are part of 70S ribosomes or polysomes). Required for efficient processing of 16S rRNA. May interact with the 5'-terminal helix region of 16S rRNA. In Salinispora tropica (strain ATCC BAA-916 / DSM 44818 / JCM 13857 / NBRC 105044 / CNB-440), this protein is Ribosome-binding factor A.